The primary structure comprises 155 residues: Ribosomal RNA large subunit methyltransferase H (155 aa).

S-adenosyl-L-methionine contacts are provided by residues Leu73, Gly104, and 123-128 (LSPLTL).

The protein belongs to the RNA methyltransferase RlmH family. As to quaternary structure, homodimer.

It is found in the cytoplasm. The catalysed reaction is pseudouridine(1915) in 23S rRNA + S-adenosyl-L-methionine = N(3)-methylpseudouridine(1915) in 23S rRNA + S-adenosyl-L-homocysteine + H(+). In terms of biological role, specifically methylates the pseudouridine at position 1915 (m3Psi1915) in 23S rRNA. This chain is Ribosomal RNA large subunit methyltransferase H, found in Pseudomonas syringae pv. tomato (strain ATCC BAA-871 / DC3000).